Here is a 162-residue protein sequence, read N- to C-terminus: Endoribonuclease YbeY (162 aa).

Positions 118, 122, and 128 each coordinate Zn(2+).

The protein belongs to the endoribonuclease YbeY family. Zn(2+) serves as cofactor.

The protein localises to the cytoplasm. Its function is as follows. Single strand-specific metallo-endoribonuclease involved in late-stage 70S ribosome quality control and in maturation of the 3' terminus of the 16S rRNA. In Glaesserella parasuis serovar 5 (strain SH0165) (Haemophilus parasuis), this protein is Endoribonuclease YbeY.